The primary structure comprises 239 residues: UPF0641 membrane protein YHR140W (239 aa).

The Cytoplasmic portion of the chain corresponds to 1 to 11 (MMSCLVPTRFT). The chain crosses the membrane as a helical span at residues 12–31 (LTLNTACLLTSTWGFVRATS). Topologically, residues 32-45 (VVLPPSLSKAGHKQ) are lumenal. Residues 46-66 (FLTIISIIATIINNAVNISNY) form a helical membrane-spanning segment. The Cytoplasmic portion of the chain corresponds to 67–99 (YIQRNNKMNLETKKKSDFISRHVTLPVSLVLES). A helical membrane pass occupies residues 100 to 120 (IVATVYWPLRLFFVNLIMHGV). Topologically, residues 121–125 (ESTAK) are lumenal. Residues 126 to 146 (TPFPMTVDMAIHLYPILYLLA) form a helical membrane-spanning segment. Over 147–162 (DHYLSGSGTKFKLSNK) the chain is Cytoplasmic. Residues 163-183 (HAWLIVTSLAFSYFQYLAFLI) traverse the membrane as a helical segment. At 184-204 (DAGQGQAYPYPFLDVNEPYKS) the chain is on the lumenal side. The helical transmembrane segment at 205–225 (IIFVVVATITWAYYVFYQKFP) threads the bilayer. Residues 226–239 (PKYIKKSAKKGDKN) are Cytoplasmic-facing.

The protein belongs to the UPF0641 family.

The protein localises to the endoplasmic reticulum membrane. The sequence is that of UPF0641 membrane protein YHR140W from Saccharomyces cerevisiae (strain ATCC 204508 / S288c) (Baker's yeast).